Here is a 365-residue protein sequence, read N- to C-terminus: sn-glycerol-3-phosphate import ATP-binding protein UgpC (365 aa).

In terms of domain architecture, ABC transporter spans 4 to 234 (LSLRNVQKHY…PASTFVAGFI (231 aa)). Position 36–43 (36–43 (GPSGCGKS)) interacts with ATP.

This sequence belongs to the ABC transporter superfamily. sn-glycerol-3-phosphate importer (TC 3.A.1.1.3) family. As to quaternary structure, the complex is composed of two ATP-binding proteins (UgpC), two transmembrane proteins (UgpA and UgpE) and a solute-binding protein (UgpB).

It is found in the cell inner membrane. It carries out the reaction sn-glycerol 3-phosphate(out) + ATP + H2O = sn-glycerol 3-phosphate(in) + ADP + phosphate + H(+). In terms of biological role, part of the ABC transporter complex UgpBAEC involved in sn-glycerol-3-phosphate (G3P) import. Responsible for energy coupling to the transport system. The polypeptide is sn-glycerol-3-phosphate import ATP-binding protein UgpC (Ralstonia nicotianae (strain ATCC BAA-1114 / GMI1000) (Ralstonia solanacearum)).